A 183-amino-acid polypeptide reads, in one-letter code: Transcription factor E (183 aa).

The HTH TFE/IIEalpha-type domain occupies 4–97; it reads YIELVRRYVY…SWSIKDEDIR (94 aa).

This sequence belongs to the TFE family. As to quaternary structure, monomer. Interaction with RNA polymerase subunits RpoF and RpoE is necessary for Tfe stimulatory transcription activity. Able to interact with Tbp and RNA polymerase in the absence of DNA promoter. Interacts both with the preinitiation and elongation complexes.

Its function is as follows. Transcription factor that plays a role in the activation of archaeal genes transcribed by RNA polymerase. Facilitates transcription initiation by enhancing TATA-box recognition by TATA-box-binding protein (Tbp), and transcription factor B (Tfb) and RNA polymerase recruitment. Not absolutely required for transcription in vitro, but particularly important in cases where Tbp or Tfb function is not optimal. It dynamically alters the nucleic acid-binding properties of RNA polymerases by stabilizing the initiation complex and destabilizing elongation complexes. Seems to translocate with the RNA polymerase following initiation and acts by binding to the non template strand of the transcription bubble in elongation complexes. The chain is Transcription factor E from Caldivirga maquilingensis (strain ATCC 700844 / DSM 13496 / JCM 10307 / IC-167).